A 1150-amino-acid polypeptide reads, in one-letter code: PAN2-PAN3 deadenylation complex catalytic subunit PAN2 (1150 aa).

WD repeat units lie at residues 26–67 (AHHS…MEFQ), 114–156 (GHVN…ITKE), 158–194 (PAPN…VINT), and 290–328 (GHTH…VSFV). The tract at residues 326–471 (SFVDQGLPVE…IRTDIESLKS (146 aa)) is linker. In terms of domain architecture, USP spans 472–862 (VVPNMYHLFE…TPLVVMFQLK (391 aa)). Residues 911–1079 (AIDAEFVLAK…HDSIEDANTA (169 aa)) form the Exonuclease domain. A divalent metal cation contacts are provided by aspartate 913, glutamate 915, aspartate 1022, and aspartate 1075. The segment at 1118–1150 (GQSAQRTETPPMVDDAQPGALLPYQPPELLQGS) is disordered.

It belongs to the peptidase C19 family. PAN2 subfamily. Forms a heterotrimer with an asymmetric homodimer of the regulatory subunit PAN3 to form the poly(A)-nuclease (PAN) deadenylation complex. Requires a divalent metal cation as cofactor.

The protein resides in the cytoplasm. It carries out the reaction Exonucleolytic cleavage of poly(A) to 5'-AMP.. Its activity is regulated as follows. Positively regulated by the regulatory subunit PAN3. Catalytic subunit of the poly(A)-nuclease (PAN) deadenylation complex, one of two cytoplasmic mRNA deadenylases involved in mRNA turnover. PAN specifically shortens poly(A) tails of RNA and the activity is stimulated by poly(A)-binding protein PAB1. PAN deadenylation is followed by rapid degradation of the shortened mRNA tails by the CCR4-NOT complex. Deadenylated mRNAs are then degraded by two alternative mechanisms, namely exosome-mediated 3'-5' exonucleolytic degradation, or deadenylation-dependent mRNA decaping and subsequent 5'-3' exonucleolytic degradation by XRN1. May also be involved in post-transcriptional maturation of mRNA poly(A) tails. The polypeptide is PAN2-PAN3 deadenylation complex catalytic subunit PAN2 (Pyricularia oryzae (strain 70-15 / ATCC MYA-4617 / FGSC 8958) (Rice blast fungus)).